The sequence spans 706 residues: Double-strand break repair protein MRE11 (706 aa).

N-acetylserine is present on serine 2. A Phosphoserine modification is found at serine 2. Mn(2+) is bound by residues aspartate 20, histidine 22, and aspartate 60. Residues 87–117 form an interaction with NBN region; the sequence is RPVQFEVISDQSVNFGFSKFPWVNYQDGNLN. Asparagine 128 is a binding site for Mn(2+). Histidine 129 (proton donor) is an active-site residue. Histidine 217, histidine 245, and histidine 247 together coordinate Mn(2+). Lysine 255 participates in a covalent cross-link: Glycyl lysine isopeptide (Lys-Gly) (interchain with G-Cter in SUMO2). Serine 275 carries the phosphoserine modification. Lysine 282 is covalently cross-linked (Glycyl lysine isopeptide (Lys-Gly) (interchain with G-Cter in UFM1)). Residue lysine 339 forms a Glycyl lysine isopeptide (Lys-Gly) (interchain with G-Cter in ubiquitin) linkage. Residues lysine 384 and lysine 468 each participate in a glycyl lysine isopeptide (Lys-Gly) (interchain with G-Cter in SUMO) cross-link. Lysine 481 is covalently cross-linked (Glycyl lysine isopeptide (Lys-Gly) (interchain with G-Cter in ubiquitin)). Residues 505–514 are compositionally biased toward basic and acidic residues; that stretch reads FRESRQRNTN. The disordered stretch occupies residues 505 to 706; the sequence is FRESRQRNTN…SSSCPRRNRR (202 aa). Positions 531-541 are enriched in polar residues; it reads RSQSETSTSAF. Residues 569–579 are compositionally biased toward basic residues; it reads GRGRGRGRRGA. 9 positions are modified to asymmetric dimethylarginine: arginine 570, arginine 572, arginine 574, arginine 576, arginine 577, arginine 580, arginine 587, arginine 592, and arginine 594. A GAR motif is present at residues 570 to 594; the sequence is RGRGRGRRGARGQSSAPRGGSQRGR. Positions 580-589 are enriched in low complexity; the sequence is RGQSSAPRGG. Polar residues predominate over residues 603 to 617; that stretch reads RGRSSKATSSTSRNM. Serine 618, serine 640, and serine 648 each carry phosphoserine. Positions 643–653 are enriched in acidic residues; that stretch reads IEVDDSDEDDI. The segment covering 655–679 has biased composition (polar residues); that stretch reads PTNSRADQRWSGTTSSKRMSQSQTA. Position 671 is an N6-lactoyllysine (lysine 671). Serine 674, serine 676, serine 686, and serine 699 each carry phosphoserine. Over residues 684 to 694 the composition is skewed to acidic residues; sequence FESDEDDDDDP.

This sequence belongs to the MRE11/RAD32 family. Component of the MRN complex composed of two heterodimers RAD50 and MRE11 associated with a single NBN. The MRN complexes dimerize on DNA to form joined MRN-MRN oligomers required for DNA double-strand break repair. As part of the MRN complex, interacts with MCM9; the interaction recruits the complex to DNA repair sites. Component of the BASC complex, at least composed of BRCA1, MSH2, MSH6, MLH1, ATM, BLM, RAD50, MRE11 and NBN. Found in a complex with TERF2. Interacts with DCLRE1C/Artemis and DCLRE1B/Apollo. Interacts with ATF2. Interacts with EXD2. Interacts with MRNIP. Interacts with SAMHD1; leading to stimulate 3'-5' exonuclease activity. Interacts (when ubiquitinated) with UBQLN4 (via its UBA domain). Interacts with CYREN (via XLF motif). Interacts with GFI1; promoting methylation by PRMT1. Interacts with DYNLL1; inhibiting the activity of MRE11. Interacts with C1QBP and RAD50; interaction takes place in absence of DNA damage to form the MRC (MRE11-RAD50-C1QBP) complex that inhibits the activity of MRE11. Interacts with AGER/RAGE; AGER is recruited to DNA double-strand break sites where it enhances MRE11 endonuclease activity to promote DNA repair. Mn(2+) is required as a cofactor. Phosphorylated by ATM at Ser-674 and Ser-676 in response to DNA damage, promoting MRE11 activity: phosphorylation activates MRE11 by preventing the interaction between MRE11 and the C1QBP inhibitor. Phosphorylation at Ser-648 by PLK1 primes for phosphorylation at Ser-686 by CK2, inhibiting recruitment of the MRN complex to DNA damage sites. In terms of processing, asymmetric dimethylation by PRMT1 promotes MRE11 exonuclease activity. Post-translationally, lactylation at Lys-671 by CREBBP/CBP in response to DNA damage promotes DNA binding and MRE11 activity. Acetylated on lysine residues by KAT2A /GCN5. In terms of processing, ubiquitinated following DNA damage. Ubiquitination triggers interaction with UBQLN4, leading to MRE11 removal from chromatin and degradation by the proteasome. Ubiquitinated at Lys-339 and Lys-481 by RNF126 via 'Lys-27'- and 'Lys-29'-linked polyubiquitin chains, promoting the exonuclease activity of MRE11. Post-translationally, SUMOylated by PIAS1, stabilizing MRE11 on chromatin during end resection. DeSUMOylated by SENP3 following removal from DNA double-strand breaks (DSBs). Ufmylation at Lys-282 promotes MRE11 activity and is required for activation of the ATM and ATR kinases by the MRN complex.

The protein localises to the nucleus. The protein resides in the chromosome. It localises to the telomere. With respect to regulation, interaction with SAMHD1 stimulates the double-strand-specific 3'-5' exonuclease activity. RBBP8/CtIP specifically promotes the endonuclease activity to clear protein-DNA adducts and generate clean double-strand break ends. DYNLL1-binding inhibits the activity of MRE11. MRE11 activity is inhibited by C1QBP: in absence of DNA damage, C1QBP interacts with unphosphorylated MRE11, preventing formation and activity of the MRN complex. In terms of biological role, core component of the MRN complex, which plays a central role in double-strand break (DSB) repair, DNA recombination, maintenance of telomere integrity and meiosis. The MRN complex is involved in the repair of DNA double-strand breaks (DSBs) via homologous recombination (HR), an error-free mechanism which primarily occurs during S and G2 phases. The complex (1) mediates the end resection of damaged DNA, which generates proper single-stranded DNA, a key initial steps in HR, and is (2) required for the recruitment of other repair factors and efficient activation of ATM and ATR upon DNA damage. Within the MRN complex, MRE11 possesses both single-strand endonuclease activity and double-strand-specific 3'-5' exonuclease activity. After DSBs, MRE11 is loaded onto DSBs sites and cleaves DNA by cooperating with RBBP8/CtIP to initiate end resection. MRE11 first endonucleolytically cleaves the 5' strand at DNA DSB ends to prevent non-homologous end joining (NHEJ) and licence HR. It then generates a single-stranded DNA gap via 3' to 5' exonucleolytic degradation to create entry sites for EXO1- and DNA2-mediated 5' to 3' long-range resection, which is required for single-strand invasion and recombination. RBBP8/CtIP specifically promotes the endonuclease activity of MRE11 to clear protein-DNA adducts and generate clean double-strand break ends. MRE11 endonuclease activity is also enhanced by AGER/RAGE. The MRN complex is also required for DNA damage signaling via activation of the ATM and ATR kinases: the nuclease activity of MRE11 is not required to activate ATM and ATR. The MRN complex is also required for the processing of R-loops. The MRN complex is involved in the activation of the cGAS-STING pathway induced by DNA damage during tumorigenesis: the MRN complex acts by displacing CGAS from nucleosome sequestration, thereby activating it. In telomeres the MRN complex may modulate t-loop formation. The chain is Double-strand break repair protein MRE11 from Mus musculus (Mouse).